The chain runs to 50 residues: Large ribosomal subunit protein bL33 (50 aa).

The protein belongs to the bacterial ribosomal protein bL33 family.

The sequence is that of Large ribosomal subunit protein bL33 from Fusobacterium nucleatum subsp. nucleatum (strain ATCC 25586 / DSM 15643 / BCRC 10681 / CIP 101130 / JCM 8532 / KCTC 2640 / LMG 13131 / VPI 4355).